We begin with the raw amino-acid sequence, 109 residues long: Probable gas vesicle protein J1 (109 aa).

The protein belongs to the gas vesicle GvpA family. In terms of assembly, interacts with GvpA.

It localises to the gas vesicle. In terms of biological role, a minor component of the gas vesicle, might be involved in nucleating gas vesicle formation. Gas vesicles (GV) are hollow, gas filled proteinaceous nanostructures. It is not clear what function GVs perform in soil bacteria. This Streptomyces coelicolor (strain ATCC BAA-471 / A3(2) / M145) protein is Probable gas vesicle protein J1 (gvpJ1).